The sequence spans 104 residues: MAVKIRLRREGRKKTPMYRIVVADSKAPRDGRFIEILGQYQPRGGENAIALKADRVNHWLNVGALPTDTVRSLLRRAGILKARHEARLAAKLQAAAVALPSGEA.

This sequence belongs to the bacterial ribosomal protein bS16 family.

This chain is Small ribosomal subunit protein bS16, found in Gemmatimonas aurantiaca (strain DSM 14586 / JCM 11422 / NBRC 100505 / T-27).